A 337-amino-acid polypeptide reads, in one-letter code: Visual pigment-like receptor peropsin (337 aa).

Residues 1-26 (MLRNNLGNSSDSKNEDGSVFSQTEHN) are Extracellular-facing. Residue Asn-8 is glycosylated (N-linked (GlcNAc...) asparagine). A helical membrane pass occupies residues 27 to 49 (IVATYLIMAGMISIISNIIVLGI). Over 50–61 (FIKYKELRTPTN) the chain is Cytoplasmic. The helical transmembrane segment at 62-87 (AIIINLAVTDIGVSSIGYPMSAASDL) threads the bilayer. Topologically, residues 88–101 (YGSWKFGYAGCQVY) are extracellular. The cysteines at positions 98 and 175 are disulfide-linked. A helical membrane pass occupies residues 102 to 121 (AGLNIFFGMASIGLLTVVAV). The Cytoplasmic segment spans residues 122–140 (DRYLTICLPDVGRRMTTNT). Residues 141–164 (YIGLILGAWINGLFWALMPIIGWA) form a helical membrane-spanning segment. Over 165–188 (SYAPDPTGATCTINWRKNDRSFVS) the chain is Extracellular. Residues 189 to 212 (YTMTVIAINFIVPLTVMFYCYYHV) traverse the membrane as a helical segment. The Cytoplasmic segment spans residues 213–240 (TLSIKHHTTSDCTESLNRDWSDQIDVTK). The chain crosses the membrane as a helical span at residues 241–264 (MSVIMICMFLVAWSPYSIVCLWAS). Topologically, residues 265–272 (FGDPKKIP) are extracellular. A helical transmembrane segment spans residues 273–297 (PPMAIIAPLFAKSSTFYNPCIYVVA). At Lys-284 the chain carries N6-(retinylidene)lysine. Residues 298–337 (NKKFRRAMLAMFKCQTHQTMPVTSILPMDVSQNPLASGRI) are Cytoplasmic-facing.

The protein belongs to the G-protein coupled receptor 1 family. Opsin subfamily. Found only in the eye, where it is localized to the retinal pigment epithelium (RPE). In the RPE, it is localized to the microvilli that surround the photoreceptor outer segments.

The protein resides in the membrane. Functionally, may play a role in rpe physiology either by detecting light directly or by monitoring the concentration of retinoids or other photoreceptor-derived compounds. The sequence is that of Visual pigment-like receptor peropsin (RRH) from Homo sapiens (Human).